Consider the following 263-residue polypeptide: Phosphoinositide-3-kinase-interacting protein 1 (263 aa).

A signal peptide spans 1 to 21 (MLLAWVQAFLVSNMLLAEAYG). The Extracellular segment spans residues 22-168 (SGGCFWDNGH…NSKEKKDLGT (147 aa)). A Kringle domain is found at 24-101 (GCFWDNGHLY…EKRPCENLSC (78 aa)). 3 disulfides stabilise this stretch: Cys25/Cys101, Cys46/Cys82, and Cys70/Cys96. N-linked (GlcNAc...) asparagine glycosylation is present at Asn98. The helical transmembrane segment at 169 to 189 (LGYVLGITMMVIIVAIGAGII) threads the bilayer. Topologically, residues 190-263 (LGYSYKRGKD…LMGQAGTPGA (74 aa)) are cytoplasmic. A compositionally biased stretch (polar residues) spans 242–251 (QTPVDPQEGS). Residues 242-263 (QTPVDPQEGSTPLMGQAGTPGA) form a disordered region.

Its subcellular location is the cell membrane. Its function is as follows. Negative regulator of hepatic phosphatidylinositol 3-kinase (PI3K) activity. The protein is Phosphoinositide-3-kinase-interacting protein 1 (PIK3IP1) of Pongo abelii (Sumatran orangutan).